We begin with the raw amino-acid sequence, 209 residues long: Glutathione S-transferase 1-1 (209 aa).

Residues 1 to 81 (MADFYYLPGS…YLVEKYGKTD (81 aa)) form the GST N-terminal domain. Residues serine 10, 51–53 (HTI), and 65–67 (ESR) each bind glutathione. One can recognise a GST C-terminal domain in the interval 87–209 (CPKKRAVINQ…GCLEFKKFFE (123 aa)).

Belongs to the GST superfamily. Theta family. Homodimer.

It catalyses the reaction RX + glutathione = an S-substituted glutathione + a halide anion + H(+). The enzyme catalyses 1,1,1-trichloro-2,2-bis(4-chlorophenyl)ethane = 1,1-dichloro-2,2-bis(4-chlorophenyl)ethylene + chloride + H(+). In terms of biological role, conjugation of reduced glutathione to a wide number of exogenous and endogenous hydrophobic electrophiles. Has DDT dehydrochlorinase activity. This chain is Glutathione S-transferase 1-1 (GstD1), found in Drosophila sechellia (Fruit fly).